Here is a 509-residue protein sequence, read N- to C-terminus: Dihydrolipoyl dehydrogenase, mitochondrial (509 aa).

A mitochondrion-targeting transit peptide spans methionine 1 to tyrosine 35. Position 66 is an N6-acetyllysine; alternate (lysine 66). Lysine 66 bears the N6-succinyllysine; alternate mark. FAD is bound by residues glutamate 71 to cysteine 80 and lysine 89. Cysteine 80 and cysteine 85 are disulfide-bonded. N6-acetyllysine; alternate occurs at positions 122, 132, and 143. An N6-succinyllysine; alternate mark is found at lysine 122, lysine 132, and lysine 143. Residue glycine 154 coordinates FAD. N6-succinyllysine occurs at positions 159 and 166. Threonine 183 to serine 185 serves as a coordination point for FAD. NAD(+) contacts are provided by residues glycine 220–glutamate 227 and glutamate 243. 2 positions are modified to N6-succinyllysine: lysine 273 and lysine 277. Valine 278 serves as a coordination point for NAD(+). 2 positions are modified to phosphoserine: serine 285 and serine 297. Position 314 (glycine 314) interacts with NAD(+). Lysine 346 carries the N6-acetyllysine modification. FAD contacts are provided by residues aspartate 355 and methionine 361 to histidine 364. Lysine 410 is modified (N6-acetyllysine; alternate). An N6-succinyllysine; alternate modification is found at lysine 410. 2 positions are modified to N6-acetyllysine: lysine 417 and lysine 420. The residue at position 430 (lysine 430) is an N6-succinyllysine. Catalysis depends on histidine 487, which acts as the Proton acceptor. Serine 502 bears the Phosphoserine mark. Lysine 505 bears the N6-acetyllysine; alternate mark. Lysine 505 is modified (N6-succinyllysine; alternate).

It belongs to the class-I pyridine nucleotide-disulfide oxidoreductase family. In terms of assembly, homodimer. Part of the multimeric pyruvate dehydrogenase complex that contains multiple copies of pyruvate dehydrogenase (subunits PDHA (PDHA1 or PDHA2) and PDHB, E1), dihydrolipoamide acetyltransferase (DLAT, E2) and lipoamide dehydrogenase (DLD, E3). These subunits are bound to an inner core composed of about 48 DLAT and 12 PDHX molecules (by non covalent bonds). The 2-oxoglutarate dehydrogenase complex is composed of OGDH (2-oxoglutarate dehydrogenase; E1), DLST (dihydrolipoamide succinyltransferase; E2), DLD (dihydrolipoamide dehydrogenase; E3) and the assembly factor KGD4. It contains multiple copies of the three enzymatic components (E1, E2 and E3). In the nucleus, the 2-oxoglutarate dehydrogenase complex associates with KAT2A. Interacts with PDHX. Requires FAD as cofactor. In terms of processing, tyrosine phosphorylated.

Its subcellular location is the mitochondrion matrix. The protein localises to the nucleus. The protein resides in the cell projection. It is found in the cilium. It localises to the flagellum. Its subcellular location is the cytoplasmic vesicle. The protein localises to the secretory vesicle. The protein resides in the acrosome. The enzyme catalyses N(6)-[(R)-dihydrolipoyl]-L-lysyl-[protein] + NAD(+) = N(6)-[(R)-lipoyl]-L-lysyl-[protein] + NADH + H(+). Functionally, lipoamide dehydrogenase is a component of the glycine cleavage system as well as an E3 component of three alpha-ketoacid dehydrogenase complexes (pyruvate-, alpha-ketoglutarate-, and branched-chain amino acid-dehydrogenase complex). The 2-oxoglutarate dehydrogenase complex is mainly active in the mitochondrion. A fraction of the 2-oxoglutarate dehydrogenase complex also localizes in the nucleus and is required for lysine succinylation of histones: associates with KAT2A on chromatin and provides succinyl-CoA to histone succinyltransferase KAT2A. In monomeric form may have additional moonlighting function as serine protease. Involved in the hyperactivation of spermatazoa during capacitation and in the spermatazoal acrosome reaction. This Cricetulus griseus (Chinese hamster) protein is Dihydrolipoyl dehydrogenase, mitochondrial (DLD).